The chain runs to 442 residues: F-box only protein 39 (442 aa).

An F-box domain is found at 16–61 (WAFLPDLCLCRVFWWLGDRDRSRAALVCRKWNQMMYSAELWRYRTI).

In terms of assembly, directly interacts with SKP1 and CUL1.

Functionally, substrate-recognition component of the SCF (SKP1-CUL1-F-box protein)-type E3 ubiquitin ligase complex. This chain is F-box only protein 39 (FBXO39), found in Homo sapiens (Human).